The sequence spans 180 residues: MNEQLQLIKSSIKSIPNHPKEGIIFRDITSLIEVPEAFQATVDLIVGNYKNQGITKVVGTESRGFIFGAPVALALGLPFVLVRKPRKLPRETISQSYQLEYGEDTLEMHVDSVKAGDNVLIIDDLLATGGTVDATIKLIKRLGGDVKHAAFVINLPELGGEERLRSLGVEPFTLVNFEGH.

It belongs to the purine/pyrimidine phosphoribosyltransferase family. Homodimer.

The protein resides in the cytoplasm. It catalyses the reaction AMP + diphosphate = 5-phospho-alpha-D-ribose 1-diphosphate + adenine. Its pathway is purine metabolism; AMP biosynthesis via salvage pathway; AMP from adenine: step 1/1. Functionally, catalyzes a salvage reaction resulting in the formation of AMP, that is energically less costly than de novo synthesis. This Mannheimia succiniciproducens (strain KCTC 0769BP / MBEL55E) protein is Adenine phosphoribosyltransferase.